The primary structure comprises 507 residues: MGVFRFISISLAAVSAANAAQILSMPHAQTVPHSYIVMMKDDTSDDDFNHHQSWLQSTHTHNITRRATIQNAGMRHKYNFRKMKGYSGIFDEETIKDIAKDPKVMFVEPDTIISVNGKVEQSNVPSWGLARISNSQPGANSYVYDSSAGEGITVYSVDTGVDINHEDFEGRAIWGSNQVNDGDDRDGSGHGTHTSGTMVGKEFGIAKKAKLVAVKVLGNDGSGPTSGIVAGINWCVEHARQNGGNDKAVMNMSLGGSSSSALNRAAAQAVEQGMFLSVAAGNENQDARSSSPASEPSVCTVGSSAEDDSRSSFSNWGPALDLFAPGSNIISARPGGGSQSMSGTSMAAPHVAGLAAYLMALEGISGGAVCDRLKELGSSSITDVGPGTPTNVLISNGGAKGGNPKPAPGPSPNPSQPSEPQQPAPSQPGEPGESFPGEPFPGEPFPGEPFPGESSPGESAPAPAPMPPSPQHPHTPYPGGDNFDFDGYWKKYFGGEHWRKMFGSFWN.

Positions 1–19 (MGVFRFISISLAAVSAANA) are cleaved as a signal peptide. The propeptide occupies 20–116 (AQILSMPHAQ…VEPDTIISVN (97 aa)). The region spanning 34–113 (SYIVMMKDDT…VMFVEPDTII (80 aa)) is the Inhibitor I9 domain. Positions 126–400 (SWGLARISNS…NVLISNGGAK (275 aa)) constitute a Peptidase S8 domain. Catalysis depends on charge relay system residues D158 and H190. The interval 175–198 (GSNQVNDGDDRDGSGHGTHTSGTM) is disordered. N251 carries N-linked (GlcNAc...) asparagine glycosylation. Residues 282-294 (NENQDARSSSPAS) show a composition bias toward polar residues. Residues 282–312 (NENQDARSSSPASEPSVCTVGSSAEDDSRSS) form a disordered region. Residue S345 is the Charge relay system of the active site. The span at 378-394 (SSSITDVGPGTPTNVLI) shows a compositional bias: polar residues. The disordered stretch occupies residues 378–486 (SSSITDVGPG…YPGGDNFDFD (109 aa)). Composition is skewed to pro residues over residues 405–428 (KPAP…PSQP) and 438–449 (EPFPGEPFPGEP). The segment covering 450–461 (FPGESSPGESAP) has biased composition (low complexity). The segment covering 462–476 (APAPMPPSPQHPHTP) has biased composition (pro residues).

This sequence belongs to the peptidase S8 family.

It is found in the secreted. Functionally, secreted subtilisin-like serine protease with keratinolytic activity that contributes to pathogenicity. The polypeptide is Subtilisin-like protease 1 (SUB1) (Trichophyton equinum (Horse ringworm fungus)).